We begin with the raw amino-acid sequence, 314 residues long: Probable phytol kinase 1, chloroplastic (314 aa).

A chloroplast-targeting transit peptide spans 1-62 (MAAAARPVDV…GVGAAAAPAV (62 aa)). 7 helical membrane-spanning segments follow: residues 72–91 (AALR…YSLV), 111–131 (IVHV…SNST), 135–155 (FFAA…GLRL), 181–201 (YVIV…IGIV), 234–254 (IGSI…LFYF), 266–286 (LALG…CIPV), and 294–314 (ISVP…SSCC).

It belongs to the polyprenol kinase family.

It is found in the plastid. The protein resides in the chloroplast membrane. The enzyme catalyses phytol + CTP = phytyl phosphate + CDP + H(+). It functions in the pathway cofactor biosynthesis; tocopherol biosynthesis. Involved in the activation and reutilization of phytol from chlorophyll degradation in plant metabolism, including tocopherol biosynthesis. Catalyzes the conversion of phytol to phytol monophosphate (PMP). The protein is Probable phytol kinase 1, chloroplastic of Oryza sativa subsp. japonica (Rice).